Consider the following 335-residue polypeptide: Tumor necrosis factor receptor superfamily member 6 (335 aa).

The N-terminal stretch at 1 to 25 is a signal peptide; sequence MLGIWTLLPLVLTSVARLSSKSVNA. Over 26–173 the chain is Extracellular; it reads QVTDINSKGL…KCKEEGSRSN (148 aa). O-linked (GalNAc...) threonine glycosylation is present at threonine 28. 3 TNFR-Cys repeats span residues 47–83, 84–127, and 128–166; these read QNLE…PDCV, PCQE…NTKC, and RCKP…TKCK. 8 disulfide bridges follow: cysteine 59–cysteine 73, cysteine 63–cysteine 82, cysteine 85–cysteine 101, cysteine 104–cysteine 119, cysteine 107–cysteine 127, cysteine 129–cysteine 143, cysteine 146–cysteine 157, and cysteine 149–cysteine 165. Asparagine 118 and asparagine 136 each carry an N-linked (GlcNAc...) asparagine glycan. Residues 174-190 form a helical membrane-spanning segment; it reads LGWLCLLLLPIPLIVWV. At 191–335 the chain is on the cytoplasmic side; it reads KRKEVQKTCR…NFRNEIQSLV (145 aa). Cysteine 199 is lipidated: S-palmitoyl cysteine. Phosphoserine is present on serine 209. The segment at 212–317 is interaction with HIPK3; sequence SPTLNPETVA…EKIQTIILKD (106 aa). Threonine 214 is modified (phosphothreonine). Residue serine 225 is modified to Phosphoserine. Residues 230 to 254 form an interaction with CALM region; the sequence is SKYITTIAGVMTLSQVKGFVRKNGV. One can recognise a Death domain in the interval 230–314; sequence SKYITTIAGV…TLAEKIQTII (85 aa). (Microbial infection) N-beta-linked (GlcNAc) arginine glycosylation occurs at arginine 250.

As to quaternary structure, component of the death-induced signaling complex (DISC) composed of cell surface receptor FAS/CD95, adapter protein FADD and the CASP8 protease; recruitment of CASP8 to the complex is required for processing of CASP8 into the p18 and p10 subunits. Interacts directly (via DED domain) with NOL3 (via CARD domain); inhibits death-inducing signaling complex (DISC) assembly by inhibiting the increase in FAS-FADD binding induced by FAS activation. Binds DAXX. Interacts with HIPK3. Part of a complex containing HIPK3 and FADD. Binds RIPK1 and FAIM2. Interacts with BABAM2 and FEM1B. Interacts with CALM. In the absence of stimulation, interacts with BIRC2, DDX3X and GSK3B. The interaction with BIRC2 and DDX3X is further enhanced upon receptor stimulation and accompanied by DDX3X and BIRC2 cleavage. In terms of processing, (Microbial infection) Glycosylated at Arg-250 by enteropathogenic E.coli protein NleB1: arginine GlcNAcylation prevents homotypic/heterotypic death domain interactions. Post-translationally, palmitoylated. Palmitoylation by ZDHHC7 prevents the lysosomal degradation of FAS regulating its expression at the plasma membrane. N- and O-glycosylated. O-glycosylated with core 1 or possibly core 8 glycans. As to expression, isoform 1 and isoform 6 are expressed at equal levels in resting peripheral blood mononuclear cells. After activation there is an increase in isoform 1 and decrease in the levels of isoform 6.

It localises to the cell membrane. It is found in the membrane raft. Its subcellular location is the secreted. Its function is as follows. Receptor for TNFSF6/FASLG. The adapter molecule FADD recruits caspase CASP8 to the activated receptor. The resulting death-inducing signaling complex (DISC) performs CASP8 proteolytic activation which initiates the subsequent cascade of caspases (aspartate-specific cysteine proteases) mediating apoptosis. FAS-mediated apoptosis may have a role in the induction of peripheral tolerance, in the antigen-stimulated suicide of mature T-cells, or both. The secreted isoforms 2 to 6 block apoptosis (in vitro). The protein is Tumor necrosis factor receptor superfamily member 6 (FAS) of Homo sapiens (Human).